The following is a 109-amino-acid chain: Protein FAM32A-like (109 aa).

Positions 1 to 48 (MSEYKSVQKGSLKLKGVSLPSKKKKKKNKEMKRLEEQVLTSENEEGTK) are disordered. Over residues 9-20 (KGSLKLKGVSLP) the composition is skewed to low complexity. A compositionally biased stretch (basic residues) spans 21–30 (SKKKKKKNKE).

Belongs to the FAM32 family.

It is found in the nucleus. Its function is as follows. May induce G2 arrest and apoptosis. May also increase cell sensitivity to apoptotic stimuli. The polypeptide is Protein FAM32A-like (fam32al) (Danio rerio (Zebrafish)).